The sequence spans 139 residues: MPIHLEIVTAERVILSDDVDMISAPTKDGRVGILPRHAPLMTILEPGELDIIKNGERTPFAVSGGFMEVLPHRVTILADTVERADEIDEARAEQARAEAEARRREAQSERDMALAEAKLRKEMVRLRVAQLHKIKRRQS.

Positions 89–110 (EARAEQARAEAEARRREAQSER) are disordered.

Belongs to the ATPase epsilon chain family. As to quaternary structure, F-type ATPases have 2 components, CF(1) - the catalytic core - and CF(0) - the membrane proton channel. CF(1) has five subunits: alpha(3), beta(3), gamma(1), delta(1), epsilon(1). CF(0) has three main subunits: a, b and c.

It localises to the cell membrane. In terms of biological role, produces ATP from ADP in the presence of a proton gradient across the membrane. This is ATP synthase epsilon chain from Chloroflexus aurantiacus (strain ATCC 29366 / DSM 635 / J-10-fl).